The sequence spans 335 residues: Solute-binding protein Veis_3954 (335 aa).

The first 34 residues, 1 to 34, serve as a signal peptide directing secretion; it reads MPSTRPLPRPSSRSLRRLALGLGLAFGLGATAAA. Residues Q50, E82, 155–158, R179, and N219 contribute to the (R)-pantoate site; that span reads NGFR.

The protein belongs to the bacterial solute-binding protein 7 family. In terms of assembly, the complex is comprised of an extracytoplasmic solute-binding protein and a heteromeric permease formed by two transmembrane proteins.

The protein resides in the periplasm. In terms of biological role, solute-binding protein that binds (R)-pantoate and D-erythronate (in vitro). Probably part of a tripartite ATP-independent periplasmic (TRAP) transport system that mediates solute transport into the cytoplasm. The sequence is that of Solute-binding protein Veis_3954 from Verminephrobacter eiseniae (strain EF01-2).